Consider the following 176-residue polypeptide: MLITIPEVFTPEEAESIRQRLDATEWLDGKVTAGYQSAKAKNNLQLAENHPLAIELGDLIVSRLTQHPLFMSAALPRKVFPPLFNRYESGQSFGFHIDNAVRSLSGSRERVRTDLSSTLFFTPPEDYDGGELIRHASNQIARGTYGAVSRHQPAQGHAGDPGGTHLIFLLDPEPDP.

The Fe2OG dioxygenase domain maps to 78-147; sequence KVFPPLFNRY…NQIARGTYGA (70 aa).

Fe(2+) serves as cofactor. Requires L-ascorbate as cofactor.

The sequence is that of PKHD-type hydroxylase Mfla_0096 from Methylobacillus flagellatus (strain ATCC 51484 / DSM 6875 / VKM B-1610 / KT).